A 368-amino-acid polypeptide reads, in one-letter code: UDP-N-acetylglucosamine--N-acetylmuramyl-(pentapeptide) pyrophosphoryl-undecaprenol N-acetylglucosamine transferase (368 aa).

UDP-N-acetyl-alpha-D-glucosamine is bound by residues 13 to 15 (TGG), Asn127, Arg168, Ser200, Ile254, and Gln299.

It belongs to the glycosyltransferase 28 family. MurG subfamily.

The protein localises to the cell inner membrane. The catalysed reaction is di-trans,octa-cis-undecaprenyl diphospho-N-acetyl-alpha-D-muramoyl-L-alanyl-D-glutamyl-meso-2,6-diaminopimeloyl-D-alanyl-D-alanine + UDP-N-acetyl-alpha-D-glucosamine = di-trans,octa-cis-undecaprenyl diphospho-[N-acetyl-alpha-D-glucosaminyl-(1-&gt;4)]-N-acetyl-alpha-D-muramoyl-L-alanyl-D-glutamyl-meso-2,6-diaminopimeloyl-D-alanyl-D-alanine + UDP + H(+). Its pathway is cell wall biogenesis; peptidoglycan biosynthesis. Cell wall formation. Catalyzes the transfer of a GlcNAc subunit on undecaprenyl-pyrophosphoryl-MurNAc-pentapeptide (lipid intermediate I) to form undecaprenyl-pyrophosphoryl-MurNAc-(pentapeptide)GlcNAc (lipid intermediate II). This Parabacteroides distasonis (strain ATCC 8503 / DSM 20701 / CIP 104284 / JCM 5825 / NCTC 11152) protein is UDP-N-acetylglucosamine--N-acetylmuramyl-(pentapeptide) pyrophosphoryl-undecaprenol N-acetylglucosamine transferase.